Consider the following 249-residue polypeptide: MTRKLVLLRHGQSQWNSMNRFTGWVDIGLTEQGHQEATMAGHLMKEEGLEFDVAHTSLLKRAIHTLQDALKALDQDWLPIYKSWRLNERHYGALQGLDKIDTAAKHGEEQVNIWRRSYDIQPPPIDLDDPSHPMRDRRYAALDRKVLPVTESLKNTLERVLPYWNDAIAPQLNDNKTVLISAHGNSLRALYKYLNQESDEKILNVNIPTGIPLLFELSDTLQVVSYRYLGDPDAAQRAAEMVANQGKAK.

Substrate-binding positions include 9–16 (RHGQSQWN), 22–23 (TG), arginine 61, 88–91 (ERHY), lysine 99, 115–116 (RR), and 184–185 (GN). Histidine 10 (tele-phosphohistidine intermediate) is an active-site residue. Glutamate 88 (proton donor/acceptor) is an active-site residue.

This sequence belongs to the phosphoglycerate mutase family. BPG-dependent PGAM subfamily. Homodimer.

The catalysed reaction is (2R)-2-phosphoglycerate = (2R)-3-phosphoglycerate. It functions in the pathway carbohydrate degradation; glycolysis; pyruvate from D-glyceraldehyde 3-phosphate: step 3/5. Functionally, catalyzes the interconversion of 2-phosphoglycerate and 3-phosphoglycerate. This is 2,3-bisphosphoglycerate-dependent phosphoglycerate mutase from Xylella fastidiosa (strain M12).